The following is a 764-amino-acid chain: 1,4-alpha-glucan branching enzyme GlgB (764 aa).

Asp-434 functions as the Nucleophile in the catalytic mechanism. Glu-487 functions as the Proton donor in the catalytic mechanism.

This sequence belongs to the glycosyl hydrolase 13 family. GlgB subfamily. In terms of assembly, monomer.

It catalyses the reaction Transfers a segment of a (1-&gt;4)-alpha-D-glucan chain to a primary hydroxy group in a similar glucan chain.. Its pathway is glycan biosynthesis; glycogen biosynthesis. Its function is as follows. Catalyzes the formation of the alpha-1,6-glucosidic linkages in glycogen by scission of a 1,4-alpha-linked oligosaccharide from growing alpha-1,4-glucan chains and the subsequent attachment of the oligosaccharide to the alpha-1,6 position. The chain is 1,4-alpha-glucan branching enzyme GlgB from Trichormus variabilis (strain ATCC 29413 / PCC 7937) (Anabaena variabilis).